Consider the following 843-residue polypeptide: INO80 complex subunit D-B (843 aa).

Over residues 159–175 (TLNHKQKQQDHSVDTNH) the composition is skewed to basic and acidic residues. Disordered regions lie at residues 159–216 (TLNH…PTVR), 221–240 (FKTS…STDN), 503–550 (YHHH…LPQG), 695–726 (SLLH…HLTD), and 791–843 (LSTP…TAAP). 3 stretches are compositionally biased toward polar residues: residues 176–187 (LRTSSLPSTLSH), 197–216 (RATQ…PTVR), and 221–231 (FKTSSSLQDTH). The segment covering 503 to 540 (YHHHQQIQRHRPLKKAKPPALSKKHKKKGKRGTQRRPQ) has biased composition (basic residues). Positions 705 to 717 (PPSPPSPQPPLTP) are enriched in pro residues. Positions 796–821 (QPSSALSALPQSSQTRSTTTSPTSQT) are enriched in low complexity.

This sequence belongs to the INO80D family. In terms of assembly, component of the chromatin-remodeling INO80 complex.

The protein resides in the nucleus. Its function is as follows. Putative regulatory component of the chromatin remodeling INO80 complex which is involved in transcriptional regulation, DNA replication and probably DNA repair. The sequence is that of INO80 complex subunit D-B (ino80db) from Danio rerio (Zebrafish).